Consider the following 375-residue polypeptide: MQKLQISVYIYLFMLIVAGPVDLNENSEQKENVEKEGLCNACLWRENTTSSRLEAIKIQILSKLRLETAPNISKDAIRQLLPKAPPLLELIDQFDVQRDASSDGSLEDDDYHARTETVITMPTESDLLTQVEGKPKCCFFKFSSKIQYNKLVKAQLWIYLRPVKTPATVFVQILRLIKPMKDGTRYTGIRSLKLDMNPGTGIWQSIDVKTVLQNWLKQPESNLGIEIKALDENGHDLAVTFPEPGEDGLTPFLEVKVTDTPKRSRRDFGLDCDEHSTESRCCRYPLTVDFEAFGWDWIIAPKRYKANYCSGECEFVFLQKYPHTHLVHQANPRGSAGPCCTPTKMSPINMLYFNGEGQIIYGKIPAMVVDRCGCS.

The N-terminal stretch at 1-18 (MQKLQISVYIYLFMLIVA) is a signal peptide. The propeptide occupies 19–266 (GPVDLNENSE…VTDTPKRSRR (248 aa)). 2 N-linked (GlcNAc...) asparagine glycosylation sites follow: N47 and N71. 4 disulfides stabilise this stretch: C272–C282, C281–C340, C309–C372, and C313–C374.

The protein belongs to the TGF-beta family. As to quaternary structure, homodimer; disulfide-linked. Interacts with WFIKKN2, leading to inhibit its activity. Interacts with FSTL3. Post-translationally, synthesized as large precursor molecule that undergoes proteolytic cleavage to generate an N-terminal propeptide and a disulfide linked C-terminal dimer, which is the biologically active molecule. The circulating form consists of a latent complex of the C-terminal dimer and other proteins, including its propeptide, which maintain the C-terminal dimer in a latent, inactive state. Ligand activation requires additional cleavage of the prodomain by a tolloid-like metalloproteinase.

The protein localises to the secreted. Functionally, acts specifically as a negative regulator of skeletal muscle growth. The protein is Growth/differentiation factor 8 (MSTN) of Bos gaurus (Seladang).